Reading from the N-terminus, the 585-residue chain is Eukaryotic translation initiation factor 3 subunit D (585 aa).

The segment covering 43–60 has biased composition (basic and acidic residues); it reads LGRMADWTGDGKDRDRGG. Disordered stretches follow at residues 43–62 and 109–152; these read LGRM…GGRQ and RGGG…NRSA. The segment covering 109 to 130 has biased composition (gly residues); it reads RGGGTVFRGRGQRGVGQRGGRA. The RNA gate stretch occupies residues 300–314; it reads SIDLVTVNENAADAP. The interval 560 to 585 is disordered; that stretch reads VPPNTFEEDDEAAEEQEEKAEEESEE. A compositionally biased stretch (acidic residues) spans 565 to 585; it reads FEEDDEAAEEQEEKAEEESEE.

It belongs to the eIF-3 subunit D family. As to quaternary structure, component of the eukaryotic translation initiation factor 3 (eIF-3) complex.

It localises to the cytoplasm. Functionally, mRNA cap-binding component of the eukaryotic translation initiation factor 3 (eIF-3) complex, which is involved in protein synthesis of a specialized repertoire of mRNAs and, together with other initiation factors, stimulates binding of mRNA and methionyl-tRNAi to the 40S ribosome. The eIF-3 complex specifically targets and initiates translation of a subset of mRNAs involved in cell proliferation. In the eIF-3 complex, eif3d specifically recognizes and binds the 7-methylguanosine cap of a subset of mRNAs. This is Eukaryotic translation initiation factor 3 subunit D from Neosartorya fischeri (strain ATCC 1020 / DSM 3700 / CBS 544.65 / FGSC A1164 / JCM 1740 / NRRL 181 / WB 181) (Aspergillus fischerianus).